Reading from the N-terminus, the 209-residue chain is FMN-dependent NADH:quinone oxidoreductase 2 (209 aa).

Residues serine 9, 15-17 (SVS), and 97-100 (MWNF) contribute to the FMN site.

Belongs to the azoreductase type 1 family. As to quaternary structure, homodimer. FMN is required as a cofactor.

The catalysed reaction is 2 a quinone + NADH + H(+) = 2 a 1,4-benzosemiquinone + NAD(+). It catalyses the reaction N,N-dimethyl-1,4-phenylenediamine + anthranilate + 2 NAD(+) = 2-(4-dimethylaminophenyl)diazenylbenzoate + 2 NADH + 2 H(+). Its function is as follows. Quinone reductase that provides resistance to thiol-specific stress caused by electrophilic quinones. In terms of biological role, also exhibits azoreductase activity. Catalyzes the reductive cleavage of the azo bond in aromatic azo compounds to the corresponding amines. In Pseudomonas syringae pv. tomato (strain ATCC BAA-871 / DC3000), this protein is FMN-dependent NADH:quinone oxidoreductase 2.